Here is a 344-residue protein sequence, read N- to C-terminus: L-rhamnose-proton symporter (344 aa).

10 helical membrane passes run 4 to 24 (AITMGIFWHLIGAASAACFYA), 38 to 58 (WSVGGIVSWLILPWAISALLL), 68 to 88 (FNLSTLLPVFLFGAMWGIGNI), 101 to 121 (MGIGIAIGITLIVGTLMTPII), 137 to 157 (TLLGVFVALIGVGIVTRAGQL), 175 to 195 (LLLAVMCGIFSAGMSFAMNAA), 214 to 234 (LPSYVVIMGGGALVNLGFCFI), 259 to 279 (ILLSALGGLMWYLQFFFYAWG), 290 to 310 (MSWMLHMSFYVLCGGLVGLVL), and 321 to 341 (VAVLSLGCVVIIIAANIVGLG).

It belongs to the L-rhamnose transporter (TC 2.A.7.6) family.

It localises to the cell inner membrane. The enzyme catalyses L-rhamnopyranose(in) + H(+)(in) = L-rhamnopyranose(out) + H(+)(out). In terms of biological role, uptake of L-rhamnose across the cytoplasmic membrane with the concomitant transport of protons into the cell (symport system). This Salmonella gallinarum (strain 287/91 / NCTC 13346) protein is L-rhamnose-proton symporter.